The sequence spans 309 residues: Dicarboxylate carrier SLC25A8 (309 aa).

Residues 1 to 16 (MVGFKATDVPPTATVK) lie on the Mitochondrial intermembrane side of the membrane. Solcar repeat units lie at residues 11–106 (PTAT…VKQF), 114–203 (ASIG…IKDA), and 212–297 (DDLP…LKRA). The segment at 16–63 (KFLGAGTAACIADLITFPLDTAKVRLQIQGESQGPVRATASAQYRGVM) is important for interaction with long-chain fatty acids. A helical transmembrane segment spans residues 17 to 40 (FLGAGTAACIADLITFPLDTAKVR). The Mitochondrial matrix segment spans residues 41–77 (LQIQGESQGPVRATASAQYRGVMGTILTMVRTEGPRS). A helical transmembrane segment spans residues 78-103 (LYNGLVAGLQRQMSFASVRIGLYDSV). The Mitochondrial intermembrane portion of the chain corresponds to 104 to 119 (KQFYTKGSEHASIGSR). Residues 120 to 145 (LLAGSTTGALAVAVAQPTDVVKVRFQ) form a helical membrane-spanning segment. The Mitochondrial matrix portion of the chain corresponds to 146-173 (AQARAGGGRRYQSTVNAYKTIAREEGFR). A helical transmembrane segment spans residues 174–199 (GLWKGTSPNVARNAIVNCAELVTYDL). Over 200 to 217 (IKDALLKANLMTDDLPCH) the chain is Mitochondrial intermembrane. Residues 218-242 (FTSAFGAGFCTTVIASPVDVVKTRY) form a helical membrane-spanning segment. At 243–268 (MNSALGQYSSAGHCALTMLQKEGPRA) the chain is on the mitochondrial matrix side. Residues 269–294 (FYKGFMPSFLRLGSWNVVMFVTYEQL) form a helical membrane-spanning segment. The interval 278–285 (LRLGSWNV) is important for interaction with long-chain fatty acids. Residues 295–309 (KRALMAACTSREAPF) are Mitochondrial intermembrane-facing.

The protein belongs to the mitochondrial carrier (TC 2.A.29) family. As to quaternary structure, homotetramer. Adopts an asymmetrical dimer of dimers functional form. In terms of tissue distribution, widely expressed in adult human tissues, including tissues rich in macrophages. Most expressed in white adipose tissue and skeletal muscle.

Its subcellular location is the mitochondrion inner membrane. The catalysed reaction is L-aspartate(out) + phosphate(in) + H(+)(in) = L-aspartate(in) + phosphate(out) + H(+)(out). It carries out the reaction oxaloacetate(out) + phosphate(in) + H(+)(in) = oxaloacetate(in) + phosphate(out) + H(+)(out). It catalyses the reaction (S)-malate(out) + phosphate(in) + H(+)(in) = (S)-malate(in) + phosphate(out) + H(+)(out). The enzyme catalyses malonate(out) + phosphate(in) + H(+)(in) = malonate(in) + phosphate(out) + H(+)(out). The catalysed reaction is sulfate(out) + phosphate(in) + H(+)(in) = sulfate(in) + phosphate(out) + H(+)(out). It carries out the reaction (S)-malate(out) = (S)-malate(in). It catalyses the reaction L-aspartate(out) = L-aspartate(in). The enzyme catalyses phosphate(in) = phosphate(out). The catalysed reaction is chloride(in) = chloride(out). It carries out the reaction H(+)(in) = H(+)(out). It catalyses the reaction a long-chain fatty acid(out) = a long-chain fatty acid(in). Inhibited by pyridoxal- 5'-phosphate, bathophenanthroline, tannic acid, bromocresol purple, butylmalonate and phenylsuccinate. Proton conductance is activated by cardiolipin and long-chain free fatty acids and inhibited by purine nucleotides ATP and ADP. Chloride ion transporter activity is inhibited by long-chain free fatty acids. Its function is as follows. Antiporter that exports dicarboxylate intermediates of the Krebs cycle in exchange for phosphate plus a proton across the inner membrane of mitochondria, a process driven by mitochondrial motive force with an overall impact on glycolysis, glutaminolysis and glutathione-dependent redox balance. Continuous export of oxaloacetate and related four-carbon dicarboxylates from mitochondrial matrix into the cytosol negatively regulates the oxidation of acetyl-CoA substrates via the Krebs cycle, lowering the ATP/ADP ratio and reactive oxygen species (ROS) production. May mediate inducible proton entry into the mitochondrial matrix affecting ATP turnover as a protection mechanism against oxidative stress. The proton currents are most likely associated with fatty acid flipping across the inner membrane of mitochondria in a metabolic process regulated by free fatty acids and purine nucleotides. Regulates the use of glucose as a source of energy. Required for glucose-induced DRP1-dependent mitochondrial fission and neuron activation in the ventromedial nucleus of the hypothalamus (VMH). This mitochondrial adaptation mechanism modulates the VMH pool of glucose-excited neurons with an impact on systemic glucose homeostasis. Regulates ROS levels and metabolic reprogramming of macrophages during the resolution phase of inflammation. Attenuates ROS production in response to IL33 to preserve the integrity of the Krebs cycle required for persistent production of itaconate and subsequent GATA3-dependent differentiation of inflammation-resolving alternatively activated macrophages. Can unidirectionally transport anions including L-malate, L-aspartate, phosphate and chloride ions. Does not mediate adaptive thermogenesis. The polypeptide is Dicarboxylate carrier SLC25A8 (UCP2) (Homo sapiens (Human)).